A 199-amino-acid polypeptide reads, in one-letter code: dITP/XTP pyrophosphatase (199 aa).

Residue 7-12 participates in substrate binding; sequence SANKGK. Residues Asp-38 and Asp-73 each contribute to the Mg(2+) site. Asp-73 acts as the Proton acceptor in catalysis. Substrate-binding positions include Ser-74, 155–158, Lys-178, and 183–184; these read FGYD and HR.

It belongs to the HAM1 NTPase family. Homodimer. The cofactor is Mg(2+).

The catalysed reaction is XTP + H2O = XMP + diphosphate + H(+). The enzyme catalyses dITP + H2O = dIMP + diphosphate + H(+). It carries out the reaction ITP + H2O = IMP + diphosphate + H(+). Functionally, pyrophosphatase that catalyzes the hydrolysis of nucleoside triphosphates to their monophosphate derivatives, with a high preference for the non-canonical purine nucleotides XTP (xanthosine triphosphate), dITP (deoxyinosine triphosphate) and ITP. Seems to function as a house-cleaning enzyme that removes non-canonical purine nucleotides from the nucleotide pool, thus preventing their incorporation into DNA/RNA and avoiding chromosomal lesions. The protein is dITP/XTP pyrophosphatase of Aliarcobacter butzleri (strain RM4018) (Arcobacter butzleri).